The primary structure comprises 76 residues: DNA-directed RNA polymerase subunit epsilon (76 aa).

This sequence belongs to the RNA polymerase subunit epsilon family. In terms of assembly, RNAP is composed of a core of 2 alpha, a beta and a beta' subunit. The core is associated with a delta subunit, and at least one of epsilon or omega. When a sigma factor is associated with the core the holoenzyme is formed, which can initiate transcription.

It catalyses the reaction RNA(n) + a ribonucleoside 5'-triphosphate = RNA(n+1) + diphosphate. A non-essential component of RNA polymerase (RNAP). The sequence is that of DNA-directed RNA polymerase subunit epsilon from Streptococcus sanguinis (strain SK36).